The following is a 499-amino-acid chain: Bifunctional purine biosynthesis protein PurH (499 aa).

An MGS-like domain is found at 1–144 (MIKRALISVF…KNFQDVVVLT (144 aa)).

The protein belongs to the PurH family.

It carries out the reaction (6R)-10-formyltetrahydrofolate + 5-amino-1-(5-phospho-beta-D-ribosyl)imidazole-4-carboxamide = 5-formamido-1-(5-phospho-D-ribosyl)imidazole-4-carboxamide + (6S)-5,6,7,8-tetrahydrofolate. The catalysed reaction is IMP + H2O = 5-formamido-1-(5-phospho-D-ribosyl)imidazole-4-carboxamide. Its pathway is purine metabolism; IMP biosynthesis via de novo pathway; 5-formamido-1-(5-phospho-D-ribosyl)imidazole-4-carboxamide from 5-amino-1-(5-phospho-D-ribosyl)imidazole-4-carboxamide (10-formyl THF route): step 1/1. It participates in purine metabolism; IMP biosynthesis via de novo pathway; IMP from 5-formamido-1-(5-phospho-D-ribosyl)imidazole-4-carboxamide: step 1/1. The polypeptide is Bifunctional purine biosynthesis protein PurH (Clostridium acetobutylicum (strain ATCC 824 / DSM 792 / JCM 1419 / IAM 19013 / LMG 5710 / NBRC 13948 / NRRL B-527 / VKM B-1787 / 2291 / W)).